We begin with the raw amino-acid sequence, 460 residues long: Muscarinic acetylcholine receptor M1 (460 aa).

The Extracellular segment spans residues 1–22 (MNTSAPPAVSPNITVLAPGKGP). N-linked (GlcNAc...) asparagine glycosylation is found at N2 and N12. The chain crosses the membrane as a helical span at residues 23–48 (WQVAFIGITTGLLSLATVTGNLLVLI). Residues 49 to 62 (SFKVNTELKTVNNY) are Cytoplasmic-facing. Residues 63–84 (FLLSLACADLIIGTFSMNLYTT) form a helical membrane-spanning segment. The Extracellular portion of the chain corresponds to 85-95 (YLLMGHWALGT). A helical transmembrane segment spans residues 96–121 (LACDLWLALDYVASNASVMNLLLISF). An intrachain disulfide couples C98 to C178. Topologically, residues 122 to 142 (DRYFSVTRPLSYRAKRTPRRA) are cytoplasmic. A helical transmembrane segment spans residues 143 to 164 (ALMIGLAWLVSFVLWAPAILFW). At 165–185 (QYLVGERTVLAGQCYIQFLSQ) the chain is on the extracellular side. A helical transmembrane segment spans residues 186-209 (PIITFGTAMAAFYLPVTVMCTLYW). Residues 210–366 (RIYRETENRA…LVKEKKAART (157 aa)) are Cytoplasmic-facing. Disordered stretches follow at residues 225–256 (LQGSETPGKGGGSSSSSERSQPGAEGSPETPP), 274–296 (WKEEEEEDEGSMESLTSSEGEEP), and 310–351 (EAQA…QLAK). T230 carries the post-translational modification Phosphothreonine. Over residues 238-247 (SSSSERSQPG) the composition is skewed to low complexity. Over residues 328–343 (RPTRKGRERAGKGQKP) the composition is skewed to basic residues. Residues 367–390 (LSAILLAFIVTWTPYNIMVLVSTF) form a helical membrane-spanning segment. At 391–397 (CKDCVPE) the chain is on the extracellular side. Residues 398-420 (TLWELGYWLCYVNSTINPMCYAL) traverse the membrane as a helical segment. The Cytoplasmic portion of the chain corresponds to 421 to 460 (CNKAFRDTFRLLLLCRWDKRRWRKIPKRPGSVHRTPSRQC). T428 carries the phosphothreonine modification. A Phosphoserine modification is found at S451. T455 is modified (phosphothreonine). S457 is subject to Phosphoserine.

This sequence belongs to the G-protein coupled receptor 1 family. Muscarinic acetylcholine receptor subfamily. CHRM1 sub-subfamily. In terms of assembly, interacts with GPRASP2. Interacts with TMEM147.

The protein localises to the cell membrane. The protein resides in the postsynaptic cell membrane. In terms of biological role, the muscarinic acetylcholine receptor mediates various cellular responses, including inhibition of adenylate cyclase, breakdown of phosphoinositides and modulation of potassium channels through the action of G proteins. Primary transducing effect is Pi turnover. This chain is Muscarinic acetylcholine receptor M1 (CHRM1), found in Sus scrofa (Pig).